A 185-amino-acid chain; its full sequence is Ribosome-recycling factor (185 aa).

It belongs to the RRF family.

The protein localises to the cytoplasm. Its function is as follows. Responsible for the release of ribosomes from messenger RNA at the termination of protein biosynthesis. May increase the efficiency of translation by recycling ribosomes from one round of translation to another. This Corynebacterium diphtheriae (strain ATCC 700971 / NCTC 13129 / Biotype gravis) protein is Ribosome-recycling factor.